Here is a 105-residue protein sequence, read N- to C-terminus: uncharacterized protein (105 aa).

This is an uncharacterized protein from Rickettsia conorii (strain ATCC VR-613 / Malish 7).